Consider the following 501-residue polypeptide: L-ornithine N(5)-monooxygenase (501 aa).

Residues 1 to 31 (MESVERKSESSYLGMRNMQPEQRLSLDPPRL) are disordered. FAD-binding positions include 83–91 (ERQKQFAWH) and Gln-102. A substrate-binding site is contributed by Lys-107. Val-168 lines the FAD pocket. NADP(+) contacts are provided by residues 254–257 (SGQS) and Arg-279. Substrate contacts are provided by residues 293-296 (NEIF) and Asn-323. Residue 323-325 (NYS) coordinates NADP(+). Positions 366–390 (EHHGPQSRMRIHLKSSKPESEGAAN) are disordered. Over residues 381–390 (SKPESEGAAN) the composition is skewed to basic and acidic residues. Position 466–468 (466–468 (SLL)) interacts with FAD. Ser-469 is a substrate binding site.

The protein belongs to the lysine N(6)-hydroxylase/L-ornithine N(5)-oxygenase family. Homotetramer. It depends on FAD as a cofactor.

It catalyses the reaction L-ornithine + NADPH + O2 = N(5)-hydroxy-L-ornithine + NADP(+) + H2O. It carries out the reaction L-ornithine + NADH + O2 = N(5)-hydroxy-L-ornithine + NAD(+) + H2O. It participates in siderophore biosynthesis; ferrichrome biosynthesis. Functionally, L-ornithine N(5)-monooxygenase; part of the siderophore biosynthetic pathway. Aspergillus fumigatus produces four types of siderophores, low-molecular-mass iron chelators, including excreted fusarinine C (FsC) and triacetylfusarinine C (TAFC) for iron uptake; and intacellular ferricrocin (FC) for hyphal and hydroxyferricrocin (HFC) for conidial iron distribution and storage. TAFC consists of three N(2)-acetyl-N(5)-anhydromevalonyl-N(5)-hydroxyornithine residues cyclically linked by ester bonds; FC is a cyclic hexapeptide with the structure Gly-Ser-Gly-(N(5)-acetyl-N(5)-hydroxyornithine)x3. The biosynthesis of all four siderophores depends on the hydroxylation of ornithine, catalyzed by the monooxygenase sidA. SidA is highly specific for its substrate, only hydrolyzing l-ornithine, and has preference for NADPH over NADH, NADPH playing a role in stabilization of the C4a-hydroperoxyflavin intermediate. Subsequently, the pathways for biosynthesis of extra- and intracellular siderophores split. For biosynthesis of extracellular siderophores, the transacylase sidF transfers anhydromevalonyl to N(5)-hydroxyornithine. The required anhydromevalonyl-CoA moiety is derived from mevalonate by CoA ligation and dehydration catalyzed by sidI and sidH respectively. The acetylation of N(5)-hydroxyornithine for FC biosynthesis involves the constitutively expressed sidL. FC is hydroxylated to HFC by an as yet uncharacterized enzyme during conidiation. Assembly of fusarinine C (FsC) and FC is catalyzed by two different nonribosomal peptide synthetases (NRPS), sidD and sidC respectively. Subsequently, sidG catalyzes N2-acetylation of FsC for forming TAFC. Both extra- and intracellular siderophores are crucial for growth during iron limitation and virulence. The polypeptide is L-ornithine N(5)-monooxygenase (Aspergillus fumigatus (strain ATCC MYA-4609 / CBS 101355 / FGSC A1100 / Af293) (Neosartorya fumigata)).